The chain runs to 582 residues: Putative frv operon regulatory protein (582 aa).

Positions 20–39 (PGELAQQTGVSGRTILRDID) form a DNA-binding region, H-T-H motif. A PTS EIIA type-2 domain is found at 443–582 (RFFSAPGSFH…EAFMELLHKG (140 aa)). His505 is subject to Phosphohistidine; by HPr.

In terms of biological role, could be involved in the regulation of the transcription of the FRV operon. This Escherichia coli (strain K12) protein is Putative frv operon regulatory protein (frvR).